The primary structure comprises 555 residues: E3 ubiquitin-protein ligase ARIH1 (555 aa).

Positions 1 to 47 (MDSDEGYNYEFDEDEECSEEDSGAEEEEDEDDDEPDDDNLDLGEVEL) are enriched in acidic residues. The tract at residues 1-93 (MDSDEGYNYE…GGGGGPGHEQ (93 aa)) is disordered. The span at 65 to 90 (ETGGGGGSALGPGGGGGGGGGGGGPG) shows a compositional bias: gly residues. The tract at residues 103–151 (TAEQILQHMVECIREVNEVIQNPATITRILLSHFNWDKEKLMERYFDGN) is UBA-like. N6-acetyllysine is present on Lys140. The segment at 180–391 (QDMPCQICYL…SAWYNCNRYN (212 aa)) is TRIAD supradomain. Cys184, Cys187, Cys201, His203, Cys206, Cys209, Cys229, Cys234, Cys274, Cys279, Cys295, Cys297, Cys302, Cys305, His310, Cys315, Cys342, and Cys345 together coordinate Zn(2+). An RING-type 1 zinc finger spans residues 184 to 234 (CQICYLNYPNSYFTGLECGHKFCMQCWSEYLTTKIMEEGMGQTISCPAHGC). The IBR-type zinc-finger motif lies at 254 to 315 (LKYQHLITNS…GENWHDPVKC (62 aa)). The RING-type 2; atypical zinc-finger motif lies at 342 to 373 (CPKCHVTIEKDGGCNHMVCRNQNCKAEFCWVC). Cys355 is a catalytic residue. Positions 360, 365, 370, 373, 380, and 387 each coordinate Zn(2+). The ariadne domain stretch occupies residues 406–555 (RAALQRYLFY…EKDLWEYIED (150 aa)).

Belongs to the RBR family. Ariadne subfamily. As to quaternary structure, interacts (via the first RING-type zinc finger) with UBE2L3. Associates with cullin-RING ubiquitin ligase (CRL) complexes containing CUL1, CUL2 and CUL3. Interacts with neddylated CUL1. Interacts with neddylated CUL2. Interacts with neddylated CUL3. Interacts with neddylated CUL4A.

The protein resides in the cytoplasm. It is found in the nucleus. Its subcellular location is the cajal body. The catalysed reaction is [E2 ubiquitin-conjugating enzyme]-S-ubiquitinyl-L-cysteine + [acceptor protein]-L-lysine = [E2 ubiquitin-conjugating enzyme]-L-cysteine + [acceptor protein]-N(6)-ubiquitinyl-L-lysine.. Its pathway is protein modification; protein ubiquitination. With respect to regulation, autoinhibited by the ariadne domain, which masks the second RING-type zinc finger that contains the active site and inhibits the E3 activity. Inhibition is relieved upon binding to neddylated cullin-RING ubiquitin ligase complexes, which activate the E3 ligase activity of ARIH1. E3 ubiquitin-protein ligase, which catalyzes ubiquitination of target proteins together with ubiquitin-conjugating enzyme E2 UBE2L3. Acts as an atypical E3 ubiquitin-protein ligase by working together with cullin-RING ubiquitin ligase (CRL) complexes and initiating ubiquitination of CRL substrates: associates with CRL complexes and specifically mediates addition of the first ubiquitin on CRLs targets. The initial ubiquitin is then elongated by CDC34/UBE2R1 and UBE2R2. E3 ubiquitin-protein ligase activity is activated upon binding to neddylated cullin-RING ubiquitin ligase complexes. Plays a role in protein translation in response to DNA damage by mediating ubiquitination of EIF4E2, the consequences of EIF4E2 ubiquitination are however unclear. According to a report, EIF4E2 ubiquitination leads to promote EIF4E2 cap-binding and protein translation arrest. According to another report EIF4E2 ubiquitination leads to its subsequent degradation. Acts as the ligase involved in ISGylation of EIF4E2. In vitro, controls the degradation of the LINC (LInker of Nucleoskeleton and Cytoskeleton) complex member SUN2 and may therefore have a role in the formation and localization of the LINC complex, and as a consequence, may act in nuclear subcellular localization and nuclear morphology. In Bos taurus (Bovine), this protein is E3 ubiquitin-protein ligase ARIH1 (ARIH1).